Here is a 343-residue protein sequence, read N- to C-terminus: L-lysine cyclodeaminase (343 aa).

Belongs to the ornithine cyclodeaminase/mu-crystallin family. It depends on NAD(+) as a cofactor.

It catalyses the reaction L-lysine = L-pipecolate + NH4(+). The protein operates within antibiotic biosynthesis. With respect to regulation, inhibited by nipecotic acid and thiazolidine-2-carboxylic acid. Functionally, converts L-lysine to L-pipecolate, which is incorporated into multiple secondary metabolite products, including rapamycin, tobulysin, virginiamycin and pristinamycin. The polypeptide is L-lysine cyclodeaminase (rapL) (Streptomyces rapamycinicus (strain ATCC 29253 / DSM 41530 / NRRL 5491 / AYB-994) (Streptomyces hygroscopicus (strain ATCC 29253))).